The following is a 185-amino-acid chain: Large ribosomal subunit protein eL19 (185 aa).

A disordered region spans residues 152 to 185 (SDKLTSQQEARRAKNTASRAKRNEKAQIVAKVDV).

This sequence belongs to the eukaryotic ribosomal protein eL19 family.

This Tetrahymena thermophila (strain SB210) protein is Large ribosomal subunit protein eL19 (RPL19).